The sequence spans 291 residues: Protease HtpX homolog (291 aa).

Helical transmembrane passes span 4–24 (IALFLLTNLAVVVVLGIVASL) and 38–58 (LGALLGFAFIMGFGGAIISLL). Residue His144 participates in Zn(2+) binding. Glu145 is a catalytic residue. Residue His148 coordinates Zn(2+). A run of 2 helical transmembrane segments spans residues 159–179 (LIQGVMNTFVVFLSRVIGYAV) and 199–219 (VTTIVLDIVLGFLASMIVAWF). Zn(2+) is bound at residue Glu224.

This sequence belongs to the peptidase M48B family. It depends on Zn(2+) as a cofactor.

Its subcellular location is the cell inner membrane. In Paracidovorax citrulli (strain AAC00-1) (Acidovorax citrulli), this protein is Protease HtpX homolog.